A 144-amino-acid polypeptide reads, in one-letter code: Ninjurin-2 (144 aa).

At 1–62 (MESDREIIHL…KSVLEQGPFS (62 aa)) the chain is on the extracellular side. The tract at residues 27 to 39 (NHYATKKSVAESM) is helix alpha1. The interval 40–59 (LDVALFMSNAMRLKSVLEQG) is helix alpha2. The chain crosses the membrane as a helical span at residues 63 to 94 (QYYTTLLTLISASLLLQVVIGILLVVIARLNL). Residues 95-98 (NEVE) are Cytoplasmic-facing. A helical transmembrane segment spans residues 99–128 (NQWRLNQLNNAATTLVFITVVINIFITAFG). Gln-105 lines the cholesterol pocket. Residues 129–144 (AHKTGSVAARTSSNPI) lie on the Extracellular side of the membrane.

Belongs to the ninjurin family. As to quaternary structure, homooligomer; in response to stimuli, homooligomerizes into filaments. In contrast to NINJ1, the filament is curved toward the intracellular space, preventing its circularization on a relatively flat membrane to mediate plasma membrane rupture: curvature is caused by cholesterol-binding at the cytoplasmic leaflet.

It localises to the cell membrane. Its role in unclear. In contrast to NINJ1 paralog, does not mediate plasma membrane rupture (cytolysis) downstream of necroptotic and pyroptotic programmed cell death. While it is able to oligomerize and form filaments, filaments are curved toward the intracellular space, preventing circularization to mediate plasma membrane rupture. May act as a homophilic transmembrane adhesion molecule involved in nerve regeneration. Promotes axonal growth. In Rattus norvegicus (Rat), this protein is Ninjurin-2 (Ninj2).